The sequence spans 197 residues: Large ribosomal subunit protein uL11 (197 aa).

The protein belongs to the universal ribosomal protein uL11 family. Part of the ribosomal stalk of the 50S ribosomal subunit. Interacts with L10 and the large rRNA to form the base of the stalk. L10 forms an elongated spine to which L12 dimers bind in a sequential fashion forming a multimeric L10(L12)X complex. In terms of processing, one or more lysine residues are methylated.

Forms part of the ribosomal stalk which helps the ribosome interact with GTP-bound translation factors. The protein is Large ribosomal subunit protein uL11 of Mycoplasma mobile (strain ATCC 43663 / 163K / NCTC 11711) (Mesomycoplasma mobile).